Reading from the N-terminus, the 341-residue chain is Putative UPF0607 protein ENSP00000381514 (341 aa).

Residues 78 to 89 (AEEPKEATEVKD) are compositionally biased toward basic and acidic residues. Disordered stretches follow at residues 78-131 (AEEP…NPRP) and 216-282 (GLLT…KLPC). The span at 108-127 (EAASTSRPLETQGNLTSSWY) shows a compositional bias: polar residues. Basic residues predominate over residues 243 to 252 (AGHRSRKRKL).

It belongs to the UPF0607 family.

The polypeptide is Putative UPF0607 protein ENSP00000381514 (Homo sapiens (Human)).